A 257-amino-acid polypeptide reads, in one-letter code: DNA repair protein RecO (257 aa).

This sequence belongs to the RecO family.

Its function is as follows. Involved in DNA repair and RecF pathway recombination. The sequence is that of DNA repair protein RecO from Streptococcus thermophilus (strain ATCC BAA-491 / LMD-9).